The following is a 3165-amino-acid chain: Protein eyes shut homolog (3165 aa).

An N-terminal signal peptide occupies residues 1 to 21 (MTDKSIIILSLMVFHSSFING). Residues Asn42, Asn105, Asn117, and Asn166 are each glycosylated (N-linked (GlcNAc...) asparagine). 3 EGF-like domains span residues 170–212 (KQQF…KYCQ), 213–254 (ELDA…KNCS), and 256–292 (IIVQCQPHVCFHGNCSNITSNSFICECDEQFSGPFCE). 9 cysteine pairs are disulfide-bonded: Cys174-Cys189, Cys183-Cys200, Cys202-Cys211, Cys217-Cys228, Cys222-Cys242, Cys244-Cys253, Cys260-Cys270, Cys265-Cys280, and Cys282-Cys291. N-linked (GlcNAc...) asparagine glycosylation is found at Asn252, Asn269, and Asn272. 2 N-linked (GlcNAc...) asparagine glycosylation sites follow: Asn311 and Asn343. EGF-like domains follow at residues 332-368 (DVSECSLILCENGTDGIKISNDVMCICSPIFTDLLCK) and 370-406 (FQTSCESFPLKNNATFKKCEKDYHCSCMSGFTGKNCE). Disulfide bonds link Cys341/Cys356 and Cys358/Cys367. N-linked (GlcNAc...) asparagine glycosylation is present at Asn382. An intrachain disulfide couples Cys396 to Cys405. Residues Asn506, Asn520, Asn521, Asn566, and Asn573 are each glycosylated (N-linked (GlcNAc...) asparagine). 3 EGF-like domains span residues 566–602 (NITDDQENKSQHEAICEDEINRPRCSCSLSYIGRLCV), 604–641 (NVDYCLGNQSISVHGLCLALSHNCNCSDLQKYEGNICE), and 643–679 (DIEDCKSVSCKNGTTSIHLRGYFFYKCVPGFKGTRCE). Disulfide bonds link Cys592–Cys601 and Cys608–Cys620. Asn611 and Asn628 each carry an N-linked (GlcNAc...) asparagine glycan. A disulfide bond links Cys629 and Cys640. N-linked (GlcNAc...) asparagine glycosylation is present at Asn654. Cystine bridges form between Cys669/Cys678, Cys685/Cys696, Cys690/Cys705, and Cys707/Cys719. An EGF-like 9; calcium-binding domain is found at 681 to 720 (DLDECALHPCKSGATCIDQPGNYFCQCGPPFKVVDGFSCL). The 37-residue stretch at 733–769 (NIDNCILNAFEHNSTYKDLHLSYQCVCLSGWEGNFCE) folds into the EGF-like 10 domain. The N-linked (GlcNAc...) asparagine glycan is linked to Asn745. 34 cysteine pairs are disulfide-bonded: Cys759-Cys768, Cys775-Cys786, Cys780-Cys795, Cys797-Cys806, Cys813-Cys824, Cys818-Cys835, Cys837-Cys846, Cys853-Cys866, Cys860-Cys876, Cys878-Cys887, Cys894-Cys905, Cys899-Cys914, Cys916-Cys925, Cys932-Cys943, Cys937-Cys952, Cys954-Cys963, Cys970-Cys981, Cys975-Cys990, Cys992-Cys1001, Cys1008-Cys1019, Cys1013-Cys1028, Cys1030-Cys1039, Cys1046-Cys1056, Cys1051-Cys1065, Cys1067-Cys1076, Cys1083-Cys1094, Cys1088-Cys1103, Cys1105-Cys1114, Cys1121-Cys1137, Cys1131-Cys1147, Cys1149-Cys1158, Cys1165-Cys1176, Cys1170-Cys1185, and Cys1187-Cys1196. One can recognise an EGF-like 11; calcium-binding domain in the interval 771–807 (ESNECKMNPCKNNSTCTDLYKSYRCECTSGWTGQNCS). Residues Asn782, Asn783, and Asn805 are each glycosylated (N-linked (GlcNAc...) asparagine). 3 consecutive EGF-like domains span residues 809-847 (EINECDSDPCMNGGLCHESTIPGQFVCLCPPLYTGQFCH), 849-888 (RYNPCDLLNNPCRNNSTCLALVDGNQHCICREEFEGKHCE), and 890-926 (DVKECLFLSCQDYGDCEDMVNNFRCICRPGFSGSLCE). N-linked (GlcNAc...) asparagine glycans are attached at residues Asn862 and Asn863. Residues 928–964 (EINECSSEPCKNNGTCVDLTNRFFCNCEPGYHGPFCE) form the EGF-like 15; calcium-binding domain. Asn940 carries an N-linked (GlcNAc...) asparagine glycan. Positions 966 to 1002 (EVNKCKISPCLDEENCVYRTDRYNCLCAPGYTGINCE) constitute an EGF-like 16 domain. Positions 1004–1040 (NLDECLSEPCLHDGVCIDGINHYTCDCKSGFFGTHCE) constitute an EGF-like 17; calcium-binding domain. EGF-like domains follow at residues 1042-1077 (NANDCLSNPCLHGRCTEPINEYPCSCDADGTSIQCK), 1079-1115 (KINDCTSMPCMNEGFCQKSAHGFTCICPRGYTGAYCE), and 1117-1159 (SIDN…QFCE). In terms of domain architecture, EGF-like 21; calcium-binding spans 1161–1197 (NINECSSSPCLHGANCEDHINGYVCKCQPGWSGHHCE). Asn1509, Asn1906, Asn1941, and Asn2033 each carry an N-linked (GlcNAc...) asparagine glycan. The Laminin G-like 1 domain occupies 1883-2063 (FSCVCYYGDS…AVRNYHINNC (181 aa)). 4 cysteine pairs are disulfide-bonded: Cys2037–Cys2063, Cys2103–Cys2114, Cys2108–Cys2128, and Cys2130–Cys2139. The EGF-like 22 domain maps to 2099-2140 (APSVCQEDVCHNGGTCRPIFLSSGIVSFQCDCPLHFTGRFCE). Residues 2145 to 2339 (LFFPSFSGNS…NIENCHVPWC (195 aa)) enclose the Laminin G-like 2 domain. N-linked (GlcNAc...) asparagine glycans are attached at residues Asn2170, Asn2185, and Asn2228. Intrachain disulfides connect Cys2308–Cys2339, Cys2339–Cys2350, Cys2344–Cys2359, Cys2375–Cys2386, Cys2380–Cys2396, and Cys2398–Cys2407. EGF-like domains lie at 2335-2368 (HVPWCAHHLCRNNGTCLSDSENLFCECPRLYSGK) and 2371-2408 (QFASCENNPCGNGATCVPKSGTDIICLCPYGRSGPLCT). An N-linked (GlcNAc...) asparagine glycan is attached at Asn2347. Residues Asn2412, Asn2453, Asn2484, Asn2506, and Asn2532 are each glycosylated (N-linked (GlcNAc...) asparagine). The Laminin G-like 3 domain maps to 2419–2609 (SGTDAFGYTS…PNAGRSVGQC (191 aa)). Cystine bridges form between Cys2576-Cys2609, Cys2614-Cys2625, and Cys2619-Cys2634. EGF-like domains are found at residues 2610 to 2646 (HASPCSLMKCGNGGTCIESGTSVYCNCTTRWKGAFCT) and 2648 to 2689 (TVSI…IYCE). Asn2635 carries an N-linked (GlcNAc...) asparagine glycan. Cystine bridges form between Cys2636–Cys2645, Cys2652–Cys2668, Cys2662–Cys2677, and Cys2679–Cys2688. One can recognise a Laminin G-like 4 domain in the interval 2717 to 2895 (DPSFRSSELS…AKGGSNVGDC (179 aa)). 3 N-linked (GlcNAc...) asparagine glycosylation sites follow: Asn2775, Asn2800, and Asn2824. Disulfide bonds link Cys2868-Cys2895, Cys2900-Cys2911, Cys2905-Cys2920, and Cys2922-Cys2931. EGF-like domains lie at 2896–2932 (DGTACGYNTCRNGGECRVNGTTFSCRCLPDWAGNICN) and 2933–2970 (QSAYCLNNLCLHQSLCIPDQSFSYSCLCTLGWVGRYCE). Asn2914 is a glycosylation site (N-linked (GlcNAc...) asparagine). Asn2932 carries N-linked (GlcNAc...) asparagine glycosylation. Intrachain disulfides connect Cys2937/Cys2948, Cys2942/Cys2958, and Cys2960/Cys2969. Residues Asn2971, Asn3006, Asn3036, Asn3057, Asn3073, and Asn3082 are each glycosylated (N-linked (GlcNAc...) asparagine). In terms of domain architecture, Laminin G-like 5 spans 2975–3165 (FTTAKFMGNS…YDGDEQNEVT (191 aa)).

It belongs to the EYS family. Expressed in retina (at protein level).

The protein resides in the cell projection. It localises to the cilium. Its subcellular location is the photoreceptor outer segment. The protein localises to the cytoplasm. It is found in the cytoskeleton. The protein resides in the cilium axoneme. It localises to the microtubule organizing center. Its subcellular location is the centrosome. The protein localises to the secreted. It is found in the extracellular space. The protein resides in the extracellular matrix. It localises to the interphotoreceptor matrix. In terms of biological role, required to maintain the integrity of photoreceptor cells. Specifically required for normal morphology of the photoreceptor ciliary pocket, and might thus facilitate protein trafficking between the photoreceptor inner and outer segments via the transition zone. The sequence is that of Protein eyes shut homolog from Macaca fascicularis (Crab-eating macaque).